The chain runs to 164 residues: Crossover junction endodeoxyribonuclease RuvC (164 aa).

Residues D7, E67, and D139 contribute to the active site. Mg(2+)-binding residues include D7, E67, and D139.

It belongs to the RuvC family. In terms of assembly, homodimer which binds Holliday junction (HJ) DNA. The HJ becomes 2-fold symmetrical on binding to RuvC with unstacked arms; it has a different conformation from HJ DNA in complex with RuvA. In the full resolvosome a probable DNA-RuvA(4)-RuvB(12)-RuvC(2) complex forms which resolves the HJ. Mg(2+) is required as a cofactor.

The protein resides in the cytoplasm. It catalyses the reaction Endonucleolytic cleavage at a junction such as a reciprocal single-stranded crossover between two homologous DNA duplexes (Holliday junction).. Functionally, the RuvA-RuvB-RuvC complex processes Holliday junction (HJ) DNA during genetic recombination and DNA repair. Endonuclease that resolves HJ intermediates. Cleaves cruciform DNA by making single-stranded nicks across the HJ at symmetrical positions within the homologous arms, yielding a 5'-phosphate and a 3'-hydroxyl group; requires a central core of homology in the junction. The consensus cleavage sequence is 5'-(A/T)TT(C/G)-3'. Cleavage occurs on the 3'-side of the TT dinucleotide at the point of strand exchange. HJ branch migration catalyzed by RuvA-RuvB allows RuvC to scan DNA until it finds its consensus sequence, where it cleaves and resolves the cruciform DNA. The polypeptide is Crossover junction endodeoxyribonuclease RuvC (Geobacter metallireducens (strain ATCC 53774 / DSM 7210 / GS-15)).